Here is a 228-residue protein sequence, read N- to C-terminus: MKYTNIREGQFLSRPNRFIAKVEIDGKEEICHVKNTGRCRELLIPGVTVFLQEADFEHRKTKYDLIGVRKGNRLINMDSQVPNKVFCEWLEKGYFQELQHIKQEQTFRNSRFDFYLEAGQRKIFVEVKGVTLEEEGVALFPDAPTERGVKHLRELSQAVAAGYEAYVVFIIQMKDIHYFTPNIKTHQAFGDALIQADKQGVKILALDCEVTEDSIEAGDFVTVKLVEG.

This sequence belongs to the SfsA family.

The polypeptide is Sugar fermentation stimulation protein homolog (Desulfitobacterium hafniense (strain Y51)).